The primary structure comprises 785 residues: Toll-like receptor 2 (785 aa).

Residues 1-17 form the signal peptide; that stretch reads MSRVLWTLWVLGAVTNL. Topologically, residues 18 to 589 are extracellular; that stretch reads SKEEAPDQSS…RLSVSECHRT (572 aa). C31 and C37 are oxidised to a cystine. LRR repeat units lie at residues 54–77, 78–101, 102–125, 126–150, 151–175, 176–199, 200–223, 224–250, 251–278, 279–308, 309–337, 338–361, 362–388, 389–414, 415–437, 438–457, 458–478, 479–500, and 501–524; these read AVRS…RDCV, NLKA…LSLW, SLEH…RPLS, SLKF…SQLT, NLRI…AGLT, FLEE…KSIQ, NISY…DLSS, SLKH…ETHT, LVKK…NYVS, GVLE…KNIG, QIET…SLTE, DVKR…QHLK, SLEY…DAWP, SLQT…LTLK, NLTN…QWPE, KMKY…GCIP, KTLE…LNLP, QLKE…SLLP, and MLLV…DSFH. N115 carries N-linked (GlcNAc...) asparagine glycosylation. N200 and N246 each carry an N-linked (GlcNAc...) asparagine glycan. Residues C354 and C383 are joined by a disulfide bond. N-linked (GlcNAc...) asparagine glycosylation is found at N415 and N443. The cysteines at positions 433 and 455 are disulfide-linked. Residues 525 to 579 form the LRRCT domain; sequence TLKTLEAGGNNFICSCEFLSFTQEQQALAKVLIDWPANYLCDSPSHVRGQQVQDV. Residues 590 to 610 form a helical membrane-spanning segment; sequence ALVSGMCCALFLLILLTEVLC. Topologically, residues 611-785 are cytoplasmic; the sequence is HRFHGLWYMR…WLNLRTAIKS (175 aa). The TIR domain maps to 640–783; sequence VCYDAFVSYS…GFWLNLRTAI (144 aa). A Glycyl lysine isopeptide (Lys-Gly) (interchain with G-Cter in ubiquitin) cross-link involves residue K755. Positions 762–779 match the ATG16L1-binding motif motif; that stretch reads YLEWPTDDAQQEGFWLNL.

The protein belongs to the Toll-like receptor family. In terms of assembly, interacts with LY96, TLR1 and TLR6 (via extracellular domain). TLR2 seems to exist in heterodimers with either TLR1 or TLR6 before stimulation by the ligand. The heterodimers form bigger oligomers in response to their corresponding ligands as well as further heterotypic associations with other receptors such as CD14 and/or CD36. Binds MYD88 (via TIR domain). Interacts with TICAM1. Interacts with CNPY3. Interacts with ATG16L1. Interacts with PPP1R11. Interacts with TICAM2. Interacts with TIRAP. Ubiquitinated at Lys-755 by PPP1R11, leading to its degradation. Deubiquitinated by USP2. In terms of processing, glycosylation of Asn-443 is critical for secretion of the N-terminal ectodomain of TLR2.

Its subcellular location is the membrane. It localises to the cytoplasmic vesicle. It is found in the phagosome membrane. The protein localises to the membrane raft. Functionally, cooperates with LY96 to mediate the innate immune response to bacterial lipoproteins and other microbial cell wall components. Cooperates with TLR1 or TLR6 to mediate the innate immune response to bacterial lipoproteins or lipopeptides. Acts via MYD88 and TRAF6, leading to NF-kappa-B activation, cytokine secretion and the inflammatory response. May also promote apoptosis in response to lipoproteins. Forms activation clusters composed of several receptors depending on the ligand, these clusters trigger signaling from the cell surface and subsequently are targeted to the Golgi in a lipid-raft dependent pathway. Forms the cluster TLR2:TLR6:CD14:CD36 in response to diacylated lipopeptides and TLR2:TLR1:CD14 in response to triacylated lipopeptides. This Canis lupus familiaris (Dog) protein is Toll-like receptor 2 (TLR2).